A 435-amino-acid polypeptide reads, in one-letter code: UPF0053 protein Rv2366c (435 aa).

The region spanning 1-185 is the CNNM transmembrane domain; that stretch reads MTGYYQLLGS…QQRGVVAADE (185 aa). The next 2 membrane-spanning stretches (helical) occupy residues 7-27 and 89-109; these read LLGS…DAAI and VWGL…VVGV. CBS domains lie at 204-267 and 272-329; these read MVPR…GRET and VMRP…IADE.

This sequence belongs to the UPF0053 family.

The protein resides in the cell membrane. The sequence is that of UPF0053 protein Rv2366c from Mycobacterium tuberculosis (strain ATCC 25618 / H37Rv).